A 122-amino-acid chain; its full sequence is Large ribosomal subunit protein uL14 (122 aa).

The protein belongs to the universal ribosomal protein uL14 family. As to quaternary structure, part of the 50S ribosomal subunit. Forms a cluster with proteins L3 and L19. In the 70S ribosome, L14 and L19 interact and together make contacts with the 16S rRNA in bridges B5 and B8.

Binds to 23S rRNA. Forms part of two intersubunit bridges in the 70S ribosome. The sequence is that of Large ribosomal subunit protein uL14 from Chloroflexus aurantiacus (strain ATCC 29366 / DSM 635 / J-10-fl).